We begin with the raw amino-acid sequence, 275 residues long: Elongation factor Ts (275 aa).

The segment at 76-79 (TDFV) is involved in Mg(2+) ion dislocation from EF-Tu.

Belongs to the EF-Ts family.

The protein localises to the cytoplasm. Associates with the EF-Tu.GDP complex and induces the exchange of GDP to GTP. It remains bound to the aminoacyl-tRNA.EF-Tu.GTP complex up to the GTP hydrolysis stage on the ribosome. This is Elongation factor Ts from Corynebacterium glutamicum (strain ATCC 13032 / DSM 20300 / JCM 1318 / BCRC 11384 / CCUG 27702 / LMG 3730 / NBRC 12168 / NCIMB 10025 / NRRL B-2784 / 534).